Here is a 371-residue protein sequence, read N- to C-terminus: DNA replication and repair protein RecF (371 aa).

ATP is bound at residue 30-37; it reads GENAQGKT.

This sequence belongs to the RecF family.

It localises to the cytoplasm. The RecF protein is involved in DNA metabolism; it is required for DNA replication and normal SOS inducibility. RecF binds preferentially to single-stranded, linear DNA. It also seems to bind ATP. This chain is DNA replication and repair protein RecF, found in Staphylococcus haemolyticus (strain JCSC1435).